Consider the following 304-residue polypeptide: Probable 5-dehydro-4-deoxyglucarate dehydratase (304 aa).

This sequence belongs to the DapA family.

It catalyses the reaction 5-dehydro-4-deoxy-D-glucarate + H(+) = 2,5-dioxopentanoate + CO2 + H2O. The protein operates within carbohydrate acid metabolism; D-glucarate degradation; 2,5-dioxopentanoate from D-glucarate: step 2/2. This chain is Probable 5-dehydro-4-deoxyglucarate dehydratase, found in Rhodococcus opacus (strain B4).